A 175-amino-acid polypeptide reads, in one-letter code: Adenine phosphoribosyltransferase (175 aa).

This sequence belongs to the purine/pyrimidine phosphoribosyltransferase family. Homodimer.

It is found in the cytoplasm. The catalysed reaction is AMP + diphosphate = 5-phospho-alpha-D-ribose 1-diphosphate + adenine. Its pathway is purine metabolism; AMP biosynthesis via salvage pathway; AMP from adenine: step 1/1. Catalyzes a salvage reaction resulting in the formation of AMP, that is energically less costly than de novo synthesis. The protein is Adenine phosphoribosyltransferase of Francisella tularensis subsp. holarctica (strain FTNF002-00 / FTA).